The primary structure comprises 353 residues: Iron(III) enterobactin esterase (353 aa).

This sequence belongs to the Fes family.

The protein localises to the cytoplasm. It catalyses the reaction Fe(III)-enterobactin + 3 H2O + H(+) = Fe(III)-[N-(2,3-dihydroxybenzoyl)-L-serine] + 2 N-(2,3-dihydroxybenzoyl)-L-serine. It carries out the reaction Fe(III)-enterobactin + H2O = Fe(III)-[N-(2,3-dihydroxybenzoyl)-L-serine]3 + H(+). The enzyme catalyses Fe(III)-[N-(2,3-dihydroxybenzoyl)-L-serine]3 + H2O + H(+) = Fe(III)-[N-(2,3-dihydroxybenzoyl)-L-serine]2 + N-(2,3-dihydroxybenzoyl)-L-serine. The catalysed reaction is Fe(III)-[N-(2,3-dihydroxybenzoyl)-L-serine]2 + H2O + H(+) = Fe(III)-[N-(2,3-dihydroxybenzoyl)-L-serine] + N-(2,3-dihydroxybenzoyl)-L-serine. In terms of biological role, catalyzes the hydrolysis of ferric enterobactin (Fe-Ent). Is responsible for the release of iron from ferric enterobactin. The chain is Iron(III) enterobactin esterase from Yersinia enterocolitica.